A 430-amino-acid polypeptide reads, in one-letter code: Enolase (430 aa).

Glutamine 165 serves as a coordination point for (2R)-2-phosphoglycerate. The Proton donor role is filled by glutamate 207. Residues aspartate 244, glutamate 287, and aspartate 314 each contribute to the Mg(2+) site. The (2R)-2-phosphoglycerate site is built by lysine 339, arginine 368, serine 369, and lysine 390. Lysine 339 acts as the Proton acceptor in catalysis.

The protein belongs to the enolase family. Component of the RNA degradosome, a multiprotein complex involved in RNA processing and mRNA degradation. It depends on Mg(2+) as a cofactor.

It localises to the cytoplasm. The protein resides in the secreted. The protein localises to the cell surface. The enzyme catalyses (2R)-2-phosphoglycerate = phosphoenolpyruvate + H2O. It functions in the pathway carbohydrate degradation; glycolysis; pyruvate from D-glyceraldehyde 3-phosphate: step 4/5. Functionally, catalyzes the reversible conversion of 2-phosphoglycerate (2-PG) into phosphoenolpyruvate (PEP). It is essential for the degradation of carbohydrates via glycolysis. The chain is Enolase from Stenotrophomonas maltophilia (strain K279a).